The primary structure comprises 855 residues: Cone cGMP-specific 3',5'-cyclic phosphodiesterase subunit alpha' (855 aa).

2 GAF domains span residues 70-219 and 251-428; these read SVEL…SIIL and DVER…GWSL. Residues Ser92, Ser116, 164–167, and Thr171 each bind 3',5'-cyclic GMP; that span reads DKQT. One can recognise a PDEase domain in the interval 481–814; sequence EEKQLVTILK…VEWKSLADEY (334 aa). The active-site Proton donor is His557. Positions 561, 597, 598, and 718 each coordinate a divalent metal cation. The tract at residues 823–855 is disordered; it reads EMKKQEEGNTTEKAVEDSGGGGDDKKSKTCLML. Cys852 carries the post-translational modification Cysteine methyl ester. A lipid anchor (S-geranylgeranyl cysteine) is attached at Cys852. A propeptide spans 853–855 (removed in mature form); sequence LML.

The protein belongs to the cyclic nucleotide phosphodiesterase family. As to quaternary structure, composed of two alpha' subunits that are associated with 3 smaller proteins of 11, 13, and 15 kDa. It depends on a divalent metal cation as a cofactor.

It is found in the cell membrane. The enzyme catalyses 3',5'-cyclic GMP + H2O = GMP + H(+). As cone-specific cGMP phosphodiesterase, it plays an essential role in light detection and cone phototransduction by rapidly decreasing intracellular levels of cGMP. In Bos taurus (Bovine), this protein is Cone cGMP-specific 3',5'-cyclic phosphodiesterase subunit alpha' (PDE6C).